We begin with the raw amino-acid sequence, 945 residues long: Leucine--tRNA ligase (945 aa).

The 'HIGH' region signature appears at 43 to 53; the sequence is PYPNGAIHIGH. The 'KMSKS' region motif lies at 638–642; sequence KMSKS. ATP is bound at residue Lys641.

The protein belongs to the class-I aminoacyl-tRNA synthetase family.

It is found in the cytoplasm. It carries out the reaction tRNA(Leu) + L-leucine + ATP = L-leucyl-tRNA(Leu) + AMP + diphosphate. This chain is Leucine--tRNA ligase, found in Pyrobaculum aerophilum (strain ATCC 51768 / DSM 7523 / JCM 9630 / CIP 104966 / NBRC 100827 / IM2).